The sequence spans 906 residues: Formin-like protein 16 (906 aa).

Residues 1 to 28 form the signal peptide; the sequence is MAPAPSPTPLPLFLLLLLLVGVAPLAAA. Residues 34–76 are disordered; it reads QTRFPSTRTPAFATPPPITSPSPSPGTPTATPSSSPPSSSGKR. Positions 46–59 are enriched in pro residues; the sequence is ATPPPITSPSPSPG. Low complexity predominate over residues 60 to 73; the sequence is TPTATPSSSPPSSS. The chain crosses the membrane as a helical span at residues 81 to 101; sequence VAVVSTALSSFAVSGLAFFLF. Disordered regions lie at residues 113-149, 161-223, 250-404, 451-474, 677-702, and 834-906; these read AGGAGQHYGGAQGGALTGKRPEREPKRPARGNMVDEN, KEGD…SLDS, AYAR…DQQA, RKTKPADSKDASGGSTSAGLGRSN, GSLAKSTDGGNPAASSTSQGPSREER, and LQQQ…SDEE. Residues 114–128 are compositionally biased toward gly residues; it reads GGAGQHYGGAQGGAL. A compositionally biased stretch (pro residues) spans 174-185; the sequence is SRRPPQPPPPRP. A compositionally biased stretch (basic and acidic residues) spans 186–196; the sequence is YRAERRQDAHE. Positions 270–294 are enriched in pro residues; it reads SPSPAPAPAARPASPSPSLPLPPGR. A compositionally biased stretch (low complexity) spans 295-310; that stretch reads ESPSRPQSIAAAAVAS. Over residues 311–383 the composition is skewed to pro residues; the sequence is PAPPPPPPPK…KGGPPPPPPK (73 aa). In terms of domain architecture, FH2 spans 396 to 849; it reads PTGSADQQAK…PTPPPSSSQP (454 aa). Composition is skewed to polar residues over residues 463 to 474 and 677 to 697; these read GGSTSAGLGRSN and GSLAKSTDGGNPAASSTSQGP. Positions 847-866 are enriched in low complexity; the sequence is SQPAAPAATTKGAADDAPAP.

It belongs to the formin-like family. Class-I subfamily.

The protein localises to the membrane. The sequence is that of Formin-like protein 16 (FH16) from Oryza sativa subsp. japonica (Rice).